A 192-amino-acid chain; its full sequence is Signal peptidase complex catalytic subunit SEC11C (192 aa).

At 1–28 (MVRAGAVGTHLPTSSLDIFGDLRKMNKR) the chain is on the cytoplasmic side. A helical; Signal-anchor for type II membrane protein membrane pass occupies residues 29 to 48 (QLYYQVLNFAMIVSSALMIW). Residues 49 to 192 (KGLIVLTGSE…GAYVLLKRES (144 aa)) lie on the Lumenal side of the membrane. Catalysis depends on charge relay system residues S68, H108, and D134. Residues 177–188 (ALVAVMGAYVLL) are C-terminal short (CTS) helix.

Belongs to the peptidase S26B family. As to quaternary structure, component of the signal peptidase complex paralog C (SPC-C) composed of a catalytic subunit SEC11C and three accessory subunits SPCS1, SPCS2 and SPCS3. Within the complex, interacts with SPCS2 and SPCS3. The complex induces a local thinning of the ER membrane which is used to measure the length of the signal peptide (SP) h-region of protein substrates. This ensures the selectivity of the complex towards h-regions shorter than 18-20 amino acids. In terms of processing, may undergo processing at the N-terminus.

The protein resides in the endoplasmic reticulum membrane. The enzyme catalyses Cleavage of hydrophobic, N-terminal signal or leader sequences from secreted and periplasmic proteins.. Its function is as follows. Catalytic component of the signal peptidase complex (SPC) which catalyzes the cleavage of N-terminal signal sequences from nascent proteins as they are translocated into the lumen of the endoplasmic reticulum. Specifically cleaves N-terminal signal peptides that contain a hydrophobic alpha-helix (h-region) shorter than 18-20 amino acids. The polypeptide is Signal peptidase complex catalytic subunit SEC11C (Sec11c) (Rattus norvegicus (Rat)).